Here is a 492-residue protein sequence, read N- to C-terminus: RNA helicase CrhR (492 aa).

The short motif at 7 to 35 (STFADLGLSEKRCQLLADIGFEAPTQIQT) is the Q motif element. Positions 38-207 (IPLLLSGRDM…NQFLNDPALV (170 aa)) constitute a Helicase ATP-binding domain. 51–58 (SQTGTGKT) is a binding site for ATP. Residues 155–158 (DEAD) carry the DEAD box motif. Positions 234-379 (KALQPILEME…VCTIPNRSQV (146 aa)) constitute a Helicase C-terminal domain. The disordered stretch occupies residues 451 to 492 (VLRRGRNAGGGQNKSGGGYQGKPGKPRRSSGGRRPAYSDRQQ). Over residues 457-471 (NAGGGQNKSGGGYQG) the composition is skewed to gly residues.

The protein belongs to the DEAD box helicase family.

Its subcellular location is the cytoplasm. The protein localises to the cell inner membrane. The protein resides in the cellular thylakoid membrane. It catalyses the reaction ATP + H2O = ADP + phosphate + H(+). Helicase inhibited by the slowly-hydrolyzing ATP analog ATP-gamma-S. Protein is rapidly degraded upon shifting from 20 to 30 degrees Celsius, the degradation machinery is only transiently present in cells grown at 30 degrees Celsius, is inhibited by commercial protease inhibitors and requires full-length protein expression (the N-terminal fragment does not induce proteolysis although it can be degraded by wild-type extract). In terms of biological role, an ATP-dependent bidirectional RNA helicase with RNA-dependent ATPase activity; does not unwind dsDNA, uses only (d)ATP. Also has ATP-dependent RNA annealing activity; concurrent annealing and helicase activity promote strand-exchange activity. In vitro has low helicase processivity, annealing processivity is probably higher. Required for correct cold adaptation, probably by aiding translation of mRNAs required for photosynthesis and electron transport. Probably regulates the cold-shock-inducible expression of the GroESL chaperones. May partially regulate its own expression at both the transcriptional and post-transcriptional level (experiments used a construct expressing a 25 kDa trunacted protein which might have dominant-negative effects); is probably not directly involved in the pathway responsible for mRNA degradation. The sequence is that of RNA helicase CrhR from Synechocystis sp. (strain ATCC 27184 / PCC 6803 / Kazusa).